The primary structure comprises 351 residues: Peptide chain release factor 1 (351 aa).

Glutamine 229 is modified (N5-methylglutamine). The disordered stretch occupies residues 278-297 (RVDDERSADRAAQVGSGDRS).

This sequence belongs to the prokaryotic/mitochondrial release factor family. In terms of processing, methylated by PrmC. Methylation increases the termination efficiency of RF1.

It is found in the cytoplasm. Peptide chain release factor 1 directs the termination of translation in response to the peptide chain termination codons UAG and UAA. The polypeptide is Peptide chain release factor 1 (Roseobacter denitrificans (strain ATCC 33942 / OCh 114) (Erythrobacter sp. (strain OCh 114))).